We begin with the raw amino-acid sequence, 383 residues long: TnpB-like protein ORF383B (383 aa).

4 residues coordinate Zn(2+): Cys328, Cys331, Cys345, and Cys348.

The protein in the N-terminal section; belongs to the transposase 2 family. This sequence in the C-terminal section; belongs to the transposase 35 family.

The polypeptide is TnpB-like protein ORF383B (Acidianus convivator (ATV)).